The sequence spans 287 residues: Ribosomal RNA small subunit methyltransferase A (287 aa).

The S-adenosyl-L-methionine site is built by N35, V37, G62, E83, D113, and N131.

The protein belongs to the class I-like SAM-binding methyltransferase superfamily. rRNA adenine N(6)-methyltransferase family. RsmA subfamily.

It is found in the cytoplasm. The enzyme catalyses adenosine(1518)/adenosine(1519) in 16S rRNA + 4 S-adenosyl-L-methionine = N(6)-dimethyladenosine(1518)/N(6)-dimethyladenosine(1519) in 16S rRNA + 4 S-adenosyl-L-homocysteine + 4 H(+). In terms of biological role, specifically dimethylates two adjacent adenosines (A1518 and A1519) in the loop of a conserved hairpin near the 3'-end of 16S rRNA in the 30S particle. May play a critical role in biogenesis of 30S subunits. The polypeptide is Ribosomal RNA small subunit methyltransferase A (Thermobifida fusca (strain YX)).